Here is a 453-residue protein sequence, read N- to C-terminus: Bifunctional protein GlmU (453 aa).

The pyrophosphorylase stretch occupies residues 1-231 (MERTCLAVIL…EIEMTGCNTR (231 aa)). Residues 10 to 13 (LAAG), Lys24, Gln77, 82 to 83 (GT), 105 to 107 (YGD), Gly143, Glu157, Asn172, and Asn229 contribute to the UDP-N-acetyl-alpha-D-glucosamine site. Asp107 lines the Mg(2+) pocket. A Mg(2+)-binding site is contributed by Asn229. The tract at residues 232 to 252 (AELAVIERFWQERRRHQMMLS) is linker. An N-acetyltransferase region spans residues 253–453 (GVTMIAPETV…AIKAAKKAKA (201 aa)). UDP-N-acetyl-alpha-D-glucosamine-binding residues include Arg318 and Lys336. Catalysis depends on His348, which acts as the Proton acceptor. The UDP-N-acetyl-alpha-D-glucosamine site is built by Tyr351 and Asn362. Residues Ala365, 371–372 (NY), Ser390, Ser408, and Arg425 each bind acetyl-CoA.

In the N-terminal section; belongs to the N-acetylglucosamine-1-phosphate uridyltransferase family. It in the C-terminal section; belongs to the transferase hexapeptide repeat family. As to quaternary structure, homotrimer. Mg(2+) serves as cofactor.

It is found in the cytoplasm. It catalyses the reaction alpha-D-glucosamine 1-phosphate + acetyl-CoA = N-acetyl-alpha-D-glucosamine 1-phosphate + CoA + H(+). The catalysed reaction is N-acetyl-alpha-D-glucosamine 1-phosphate + UTP + H(+) = UDP-N-acetyl-alpha-D-glucosamine + diphosphate. It participates in nucleotide-sugar biosynthesis; UDP-N-acetyl-alpha-D-glucosamine biosynthesis; N-acetyl-alpha-D-glucosamine 1-phosphate from alpha-D-glucosamine 6-phosphate (route II): step 2/2. Its pathway is nucleotide-sugar biosynthesis; UDP-N-acetyl-alpha-D-glucosamine biosynthesis; UDP-N-acetyl-alpha-D-glucosamine from N-acetyl-alpha-D-glucosamine 1-phosphate: step 1/1. It functions in the pathway bacterial outer membrane biogenesis; LPS lipid A biosynthesis. Its function is as follows. Catalyzes the last two sequential reactions in the de novo biosynthetic pathway for UDP-N-acetylglucosamine (UDP-GlcNAc). The C-terminal domain catalyzes the transfer of acetyl group from acetyl coenzyme A to glucosamine-1-phosphate (GlcN-1-P) to produce N-acetylglucosamine-1-phosphate (GlcNAc-1-P), which is converted into UDP-GlcNAc by the transfer of uridine 5-monophosphate (from uridine 5-triphosphate), a reaction catalyzed by the N-terminal domain. This chain is Bifunctional protein GlmU, found in Rhizobium johnstonii (strain DSM 114642 / LMG 32736 / 3841) (Rhizobium leguminosarum bv. viciae).